Here is a 236-residue protein sequence, read N- to C-terminus: Uridylate kinase (236 aa).

9-12 (KFSG) serves as a coordination point for ATP. Residues 17-22 (GNSGFG) are involved in allosteric activation by GTP. Gly51 serves as a coordination point for UMP. ATP is bound by residues Gly52 and Arg56. UMP is bound by residues Asp72 and 133-140 (TGNPFFTT). ATP contacts are provided by Thr160, Tyr166, and Asp169.

It belongs to the UMP kinase family. In terms of assembly, homohexamer.

It is found in the cytoplasm. It catalyses the reaction UMP + ATP = UDP + ADP. It participates in pyrimidine metabolism; CTP biosynthesis via de novo pathway; UDP from UMP (UMPK route): step 1/1. Its activity is regulated as follows. Allosterically activated by GTP. Inhibited by UTP. Its function is as follows. Catalyzes the reversible phosphorylation of UMP to UDP. In Helicobacter hepaticus (strain ATCC 51449 / 3B1), this protein is Uridylate kinase.